A 1083-amino-acid chain; its full sequence is uncharacterized protein (1083 aa).

The tract at residues 93-145 is disordered; sequence SKGNLRYVPTTSRNPSNTDTYSSSIDISSSSSSINTSDDSSGKTSSNDLSDMS. Low complexity predominate over residues 108-145; that stretch reads SNTDTYSSSIDISSSSSSINTSDDSSGKTSSNDLSDMS.

The protein resides in the virion. This is an uncharacterized protein from Acanthamoeba polyphaga (Amoeba).